Reading from the N-terminus, the 203-residue chain is Probable chemoreceptor glutamine deamidase CheD (203 aa).

It belongs to the CheD family.

The enzyme catalyses L-glutaminyl-[protein] + H2O = L-glutamyl-[protein] + NH4(+). Probably deamidates glutamine residues to glutamate on methyl-accepting chemotaxis receptors (MCPs), playing an important role in chemotaxis. In Janthinobacterium sp. (strain Marseille) (Minibacterium massiliensis), this protein is Probable chemoreceptor glutamine deamidase CheD.